The following is a 1704-amino-acid chain: Vitellogenin-1 (1704 aa).

The first 14 residues, 1–14 (MKAVVLALTLAFVA), serve as a signal peptide directing secretion. The Vitellogenin domain occupies 22–660 (FAAGKTYVYK…DAATFMPKSF (639 aa)). N-linked (GlcNAc...) asparagine glycosylation is found at Asn-446, Asn-635, Asn-903, Asn-908, Asn-1019, Asn-1054, Asn-1080, Asn-1121, Asn-1174, Asn-1285, Asn-1322, Asn-1375, Asn-1379, Asn-1405, Asn-1456, and Asn-1512. The span at 1078–1109 (RRNSSSSSSSSSSSSSESRSSRSSSSSSSSSR) shows a compositional bias: low complexity. Positions 1078–1213 (RRNSSSSSSS…SSDRRSKEVM (136 aa)) are disordered. Positions 1122-1204 (SSSSSSSRRS…FSDSSSSSSS (83 aa)) are enriched in low complexity. Positions 1442–1617 (AECSFVEDTL…SWILPAESCR (176 aa)) constitute a VWFD domain. 2 disulfide bridges follow: Cys-1444/Cys-1580 and Cys-1467/Cys-1616.

Post-translationally, phosvitin, an egg yolk storage protein, is one of the most highly phosphorylated (10%) proteins in nature. The N-terminal of the blood vitellogenin is blocked. As to expression, produced by the liver, secreted into the blood and then sequestered by receptor mediated endocytosis into growing oocytes, where it is generally cleaved, giving rise to the respective yolk components composed of complex suite of small cleavage products.

Precursor of the major egg-yolk proteins that are sources of nutrients during early development of oviparous organisms. This Fundulus heteroclitus (Killifish) protein is Vitellogenin-1 (vtg1).